Reading from the N-terminus, the 369-residue chain is Transaldolase (369 aa).

The active-site Schiff-base intermediate with substrate is Lys-140.

This sequence belongs to the transaldolase family. Type 2 subfamily.

The protein resides in the cytoplasm. It catalyses the reaction D-sedoheptulose 7-phosphate + D-glyceraldehyde 3-phosphate = D-erythrose 4-phosphate + beta-D-fructose 6-phosphate. It participates in carbohydrate degradation; pentose phosphate pathway; D-glyceraldehyde 3-phosphate and beta-D-fructose 6-phosphate from D-ribose 5-phosphate and D-xylulose 5-phosphate (non-oxidative stage): step 2/3. Functionally, transaldolase is important for the balance of metabolites in the pentose-phosphate pathway. This Parafrankia sp. (strain EAN1pec) protein is Transaldolase.